Consider the following 663-residue polypeptide: Beta-galactosidase YesZ (663 aa).

Arginine 106 contributes to the substrate binding site. Cysteine 110 is a binding site for Zn(2+). Position 144 (asparagine 144) interacts with substrate. The Proton donor role is filled by glutamate 145. Cysteine 153, cysteine 155, and cysteine 158 together coordinate Zn(2+). Glutamate 296 functions as the Nucleophile in the catalytic mechanism. Glutamate 345–histidine 348 is a binding site for substrate.

This sequence belongs to the glycosyl hydrolase 42 family. Homotrimer.

It carries out the reaction Hydrolysis of terminal non-reducing beta-D-galactose residues in beta-D-galactosides.. Its function is as follows. May play a role in the degradation of rhamnogalacturonan derived from plant cell walls. The protein is Beta-galactosidase YesZ (yesZ) of Bacillus subtilis (strain 168).